Consider the following 229-residue polypeptide: MLTCVPGVLEKDDVADFRRIMDAAEWEDGRSTAGAQSALVKRNEQLPPDGDLARTLGNRIISALTANPRFISAAIPLQIFPPLFNRYVASDGHHFGVHVDNAVRGDRMTGLRIRTDLSVTLFLSEPDDYDGGDLVVEDNYGSHEVKLPAGDLVLYPASSLHLVTPVTRGTRVASFFWLQSMVRDDHARSMIFDLDTAIQSLVERLGRDDPETVKLTGIYHNLIRYWAEV.

The 103-residue stretch at 78-180 folds into the Fe2OG dioxygenase domain; the sequence is QIFPPLFNRY…RVASFFWLQS (103 aa). 3 residues coordinate Fe cation: His98, Asp100, and His161. Position 171 (Arg171) interacts with 2-oxoglutarate.

The cofactor is Fe(2+). It depends on L-ascorbate as a cofactor.

The sequence is that of PKHD-type hydroxylase Nham_1514 from Nitrobacter hamburgensis (strain DSM 10229 / NCIMB 13809 / X14).